The chain runs to 223 residues: Glutathione S-transferase U6 (223 aa).

A GST N-terminal domain is found at 5 to 84 (EEVKLLGIWA…YIDETWKHNP (80 aa)). Glutathione-binding positions include 15 to 16 (SP), 41 to 42 (NK), 55 to 56 (KI), and 68 to 69 (ES). In terms of domain architecture, GST C-terminal spans 89–216 (DPFQRSKARV…EKHIEHMNNM (128 aa)). Thr-150 bears the Phosphothreonine mark.

The protein belongs to the GST superfamily. Tau family.

Its subcellular location is the cytoplasm. It is found in the cytosol. It catalyses the reaction RX + glutathione = an S-substituted glutathione + a halide anion + H(+). In terms of biological role, may be involved in the conjugation of reduced glutathione to a wide number of exogenous and endogenous hydrophobic electrophiles and have a detoxification role against certain herbicides. This is Glutathione S-transferase U6 (GSTU6) from Arabidopsis thaliana (Mouse-ear cress).